Here is a 546-residue protein sequence, read N- to C-terminus: Phenylalanine--tRNA ligase beta subunit (546 aa).

The B5 domain occupies 266 to 342 (LAPAERVVSV…IAYGIENFDA (77 aa)). The Mg(2+) site is built by aspartate 320, aspartate 326, glutamate 329, and aspartate 330.

It belongs to the phenylalanyl-tRNA synthetase beta subunit family. Type 2 subfamily. Tetramer of two alpha and two beta subunits. It depends on Mg(2+) as a cofactor.

It is found in the cytoplasm. It carries out the reaction tRNA(Phe) + L-phenylalanine + ATP = L-phenylalanyl-tRNA(Phe) + AMP + diphosphate + H(+). In Methanoculleus marisnigri (strain ATCC 35101 / DSM 1498 / JR1), this protein is Phenylalanine--tRNA ligase beta subunit.